Here is a 235-residue protein sequence, read N- to C-terminus: Phosphoribosylaminoimidazole-succinocarboxamide synthase (235 aa).

This sequence belongs to the SAICAR synthetase family.

It catalyses the reaction 5-amino-1-(5-phospho-D-ribosyl)imidazole-4-carboxylate + L-aspartate + ATP = (2S)-2-[5-amino-1-(5-phospho-beta-D-ribosyl)imidazole-4-carboxamido]succinate + ADP + phosphate + 2 H(+). Its pathway is purine metabolism; IMP biosynthesis via de novo pathway; 5-amino-1-(5-phospho-D-ribosyl)imidazole-4-carboxamide from 5-amino-1-(5-phospho-D-ribosyl)imidazole-4-carboxylate: step 1/2. The sequence is that of Phosphoribosylaminoimidazole-succinocarboxamide synthase from Clostridium botulinum (strain Alaska E43 / Type E3).